Consider the following 441-residue polypeptide: Ribulose bisphosphate carboxylase large chain (441 aa).

Lysine 5 bears the N6,N6,N6-trimethyllysine mark. Residues asparagine 114 and threonine 164 each contribute to the substrate site. The active-site Proton acceptor is the lysine 166. Lysine 168 provides a ligand contact to substrate. Residues lysine 192, aspartate 194, and glutamate 195 each coordinate Mg(2+). At lysine 192 the chain carries N6-carboxylysine. Histidine 285 (proton acceptor) is an active-site residue. Substrate-binding residues include arginine 286, histidine 318, and serine 370.

It belongs to the RuBisCO large chain family. Type I subfamily. As to quaternary structure, heterohexadecamer of 8 large chains and 8 small chains; disulfide-linked. The disulfide link is formed within the large subunit homodimers. Requires Mg(2+) as cofactor. In terms of processing, the disulfide bond which can form in the large chain dimeric partners within the hexadecamer appears to be associated with oxidative stress and protein turnover.

It is found in the plastid. Its subcellular location is the chloroplast. It catalyses the reaction 2 (2R)-3-phosphoglycerate + 2 H(+) = D-ribulose 1,5-bisphosphate + CO2 + H2O. The enzyme catalyses D-ribulose 1,5-bisphosphate + O2 = 2-phosphoglycolate + (2R)-3-phosphoglycerate + 2 H(+). In terms of biological role, ruBisCO catalyzes two reactions: the carboxylation of D-ribulose 1,5-bisphosphate, the primary event in carbon dioxide fixation, as well as the oxidative fragmentation of the pentose substrate in the photorespiration process. Both reactions occur simultaneously and in competition at the same active site. This Drosera petiolaris (Woolly sundew) protein is Ribulose bisphosphate carboxylase large chain.